We begin with the raw amino-acid sequence, 152 residues long: Endoribonuclease YbeY (152 aa).

His117, His121, and His127 together coordinate Zn(2+).

Belongs to the endoribonuclease YbeY family. Zn(2+) is required as a cofactor.

Its subcellular location is the cytoplasm. Its function is as follows. Single strand-specific metallo-endoribonuclease involved in late-stage 70S ribosome quality control and in maturation of the 3' terminus of the 16S rRNA. The polypeptide is Endoribonuclease YbeY (Sulfurihydrogenibium sp. (strain YO3AOP1)).